The following is a 481-amino-acid chain: Glutamate--tRNA ligase 2 (481 aa).

The short motif at 17-27 is the 'HIGH' region element; sequence PSPTGFLHIGG. Basic and acidic residues predominate over residues 118-139; that stretch reads AEQRAKKQPQRYDGRWRDRDPS. A disordered region spans residues 118-143; the sequence is AEQRAKKQPQRYDGRWRDRDPSEAPA. Residues 246–250 carry the 'KMSKS' region motif; it reads KLSKR. Residue K249 participates in ATP binding.

Belongs to the class-I aminoacyl-tRNA synthetase family. Glutamate--tRNA ligase type 1 subfamily. As to quaternary structure, monomer.

It localises to the cytoplasm. It catalyses the reaction tRNA(Glu) + L-glutamate + ATP = L-glutamyl-tRNA(Glu) + AMP + diphosphate. Catalyzes the attachment of glutamate to tRNA(Glu) in a two-step reaction: glutamate is first activated by ATP to form Glu-AMP and then transferred to the acceptor end of tRNA(Glu). This Zymomonas mobilis subsp. mobilis (strain ATCC 31821 / ZM4 / CP4) protein is Glutamate--tRNA ligase 2.